The sequence spans 1400 residues: DNA-directed RNA polymerase subunit beta' (1400 aa).

Residues cysteine 70, cysteine 72, cysteine 85, and cysteine 88 each coordinate Zn(2+). Mg(2+) contacts are provided by aspartate 460, aspartate 462, and aspartate 464. Zn(2+)-binding residues include cysteine 814, cysteine 888, cysteine 895, and cysteine 898. The segment at arginine 1368–glutamate 1400 is disordered.

Belongs to the RNA polymerase beta' chain family. The RNAP catalytic core consists of 2 alpha, 1 beta, 1 beta' and 1 omega subunit. When a sigma factor is associated with the core the holoenzyme is formed, which can initiate transcription. Requires Mg(2+) as cofactor. The cofactor is Zn(2+).

It catalyses the reaction RNA(n) + a ribonucleoside 5'-triphosphate = RNA(n+1) + diphosphate. In terms of biological role, DNA-dependent RNA polymerase catalyzes the transcription of DNA into RNA using the four ribonucleoside triphosphates as substrates. The chain is DNA-directed RNA polymerase subunit beta' from Vibrio parahaemolyticus serotype O3:K6 (strain RIMD 2210633).